The following is a 774-amino-acid chain: Penicillin acylase 2 proenzyme (774 aa).

The active-site Nucleophile is the Ser-240.

It belongs to the peptidase S45 family. In terms of assembly, heterodimer of a small subunit and a large subunit processed from the same precursor.

It carries out the reaction a penicillin + H2O = 6-aminopenicillanate + a carboxylate. This Pseudomonas sp. (strain SE83) protein is Penicillin acylase 2 proenzyme (acyII).